The sequence spans 698 residues: Elongation factor G (698 aa).

Positions 8–284 (ANVRNIGIMA…AVVDYLPSPL (277 aa)) constitute a tr-type G domain. Residues 17 to 24 (AHIDAGKT), 81 to 85 (DTPGH), and 135 to 138 (NKLD) contribute to the GTP site.

Belongs to the TRAFAC class translation factor GTPase superfamily. Classic translation factor GTPase family. EF-G/EF-2 subfamily.

It localises to the cytoplasm. In terms of biological role, catalyzes the GTP-dependent ribosomal translocation step during translation elongation. During this step, the ribosome changes from the pre-translocational (PRE) to the post-translocational (POST) state as the newly formed A-site-bound peptidyl-tRNA and P-site-bound deacylated tRNA move to the P and E sites, respectively. Catalyzes the coordinated movement of the two tRNA molecules, the mRNA and conformational changes in the ribosome. In Salinispora tropica (strain ATCC BAA-916 / DSM 44818 / JCM 13857 / NBRC 105044 / CNB-440), this protein is Elongation factor G.